A 572-amino-acid chain; its full sequence is Dityrosine transporter 1 (572 aa).

Disordered regions lie at residues 1–28 (MGSE…STFH) and 49–95 (RANI…SPDT). Over 1 to 110 (MGSEPFQKKN…YTYFSKDQRL (110 aa)) the chain is Cytoplasmic. A compositionally biased stretch (polar residues) spans 13–28 (LQINSQESGTTRSTFH). Residues 50 to 62 (ANIDHDVFHEHPD) show a composition bias toward basic and acidic residues. The span at 83–95 (SSNSQSRDPSPDT) shows a compositional bias: polar residues. The helical transmembrane segment at 111 to 131 (IIFGIIIFIGFLGPMSGNIYI) threads the bilayer. The Extracellular portion of the chain corresponds to 132-149 (PALPLLQREYDVSATTIN). Residues 150 to 170 (ATVSVFMAVFSVGPLFWGALA) traverse the membrane as a helical segment. Topologically, residues 171–184 (DFGGRKFLYMVSLS) are cytoplasmic. Residues 185 to 205 (LMLIVNILLAAVPVNIAALFV) traverse the membrane as a helical segment. Topologically, residues 206 to 207 (LR) are extracellular. A helical membrane pass occupies residues 208–228 (IFQAFASSSVISLGAGTVTDV). Over 229–240 (VPPKHRGKAIAY) the chain is Cytoplasmic. Residues 241–261 (FMMGPNMGPIIAPIVAGLILM) form a helical membrane-spanning segment. At 262–267 (KGNYWR) the chain is on the extracellular side. Residues 268 to 288 (WLFGFTSIMTGIALILVTALL) form a helical membrane-spanning segment. The Cytoplasmic segment spans residues 289 to 366 (PETLRCIVGN…TLYWKMIKCP (78 aa)). Residues 367–387 (PIIITSVSTALLFSSYYAFSV) traverse the membrane as a helical segment. The Extracellular segment spans residues 388–398 (TFSYYLEHDYR). Residues 399–419 (FTMLEIGAAYVCPGVAMLLGS) form a helical membrane-spanning segment. The Cytoplasmic segment spans residues 420–446 (QSGGHLSDYLRSRWIKSHPKKKFPAEF). Residues 447 to 469 (RLLLNLIGILLTICGTIGYGWAI) form a helical membrane-spanning segment. Residues 470–472 (FFH) lie on the Extracellular side of the membrane. The helical transmembrane segment at 473 to 493 (YHFVVLLVFSALTAFGMTWCS) threads the bilayer. Residues 494-520 (NTSMTYLTELFPKRAAGTVAVSSFFRN) lie on the Cytoplasmic side of the membrane. A helical transmembrane segment spans residues 521 to 541 (VGAAISSAIILQLCNAMGIGW). Position 542 (cysteine 542) is a topological domain, extracellular. The helical transmembrane segment at 543 to 563 (FTGLGLCSSISLIGILYLLIF) threads the bilayer. Positions 548 to 572 (LCSSISLIGILYLLIFQRKYTAKEF) are required for the localization to the prospore membrane. At 564 to 572 (QRKYTAKEF) the chain is on the cytoplasmic side.

This sequence belongs to the major facilitator superfamily. CAR1 family. In terms of processing, phosphorylated.

It localises to the prospore membrane. Functionally, prospore-specific dityrosine transporter responsible for translocation of dityrosine through the prospore membrane and required for the formation of the outermost layer of the spore. This chain is Dityrosine transporter 1 (DTR1), found in Saccharomyces cerevisiae (strain ATCC 204508 / S288c) (Baker's yeast).